The sequence spans 66 residues: COP-associated protein (66 aa).

Positions 1–66 constitute an HMA domain; it reads MKVTFQVPSI…ALLDAGQEVV (66 aa). Cu cation contacts are provided by Cys12 and Cys15.

Its function is as follows. Part of a cation-transporting system which is associated with copper export out of the H.pylori cells. This chain is COP-associated protein (copP), found in Helicobacter pylori (strain J99 / ATCC 700824) (Campylobacter pylori J99).